The following is a 1919-amino-acid chain: MEPQRRELLAQCQQSLAQAMTEVEAVLGLLEAAGALSPGERRQLDEEAGGAKAELLLKLLLAKERDHFQDLRAALEKTQPHLLPILYLNGVVGPPQPAEGAGSTYSVLSTMPSDSESSSSLSSVGTTGKAPSPPPLLTDQQVNEKVENLSIQLRLMTRERNELRKRLAFATHGTAFDKRPYHRLNPDYERLKIQCVRAMSDLQSLQNQHTNALKRCEEVAKETDFYHTLHSRLLSDQTRLKDDVDMLRRENGQLLRERNLLQQSWEDMKRLHEEDQKEIGDLRAQQQQVLKHNGSSEILNKLYDTAMDKLEVVKKDYDALRKRYSEKVAIHNADLSRLEQLGEENQRLLKQTEMLTQQRDTAIQLQHQCALSLRRFEAIHHELNKATAQNKDLQWEMELLQSELTELRTTQVKTAKESEKYREERDAVYSEYKLIMSERDQVISELDKLQTEVELAESKLKSSTSEKKAANEEMEALRQIKDTVTMDAGRANKEVEILRKQCKALCQELKEALQEADVAKCRRDWAFQERDKIVAERDSIRTLCDNLRRERDRAVSELAEALRSLDDTRKQKNDVSRELKELKEQMESQLEKEARFRQLMAHSSHDSAIDTDSMEWETEVVEFERETEDIDLKALGFDMAEGVNEPCFPGDCGIFVTKVDKGSIADGRLRVNDWLLRINDVDLINKDKKQAIKALLNGEGAINMVVRRRKSLGGKVVTPLHINLSGQKDSGISLENGVYAAAVLPGSPAAKEGSLAVGDRIVAINGIALDNKSLNECESLLRSCQDSLTLSLLKVFPQSSSWSGQNIFENIKDSDKMLSFRAHGPEVQAHNKRNLIQHNNSTQTDIFYTDRLEDRKEPGPPGGSSSFLHKPFPGGPLQVCPQACPSASERSLSSFRSDASGDRGFGLVDVRGRRPLLPFETEVGPCGVGEASLDKADSEGSNSGGTWPKAMLSSTAVPEKLSVYKKPKQRKSIFDPNTFKRPQTPPKIDYLLPGPGPAHSPQPSKRAGPLTPPKPPRRSDSIKFQHRLETSSESEATLVGSSPSTSPPSALPPDVDPGEPMHASPPRKARVRIASSYYPEGDGDSSHLPAKKSCDEDLTSQKVDELGQKRRRPKSAPSFRPKLAPVVIPAQFLEEQKCVPASGELSPELQEWAPYSPGHSSRHSNPPLYPSRPSVGTVPRSLTPSTTVSSILRNPIYTVRSHRVGPCSSPPAARDAGPQGLHPSVQHQGRLSLDLSHRTCSDYSEMRATHGSNSLPSSARLGSSSNLQFKAERIKIPSTPRYPRSVVGSERGSVSHSECSTPPQSPLNIDTLSSCSQSQTSASTLPRIAVNPASLGERRKDRPYVEEPRHVKVQKGSEPLGISIVSGEKGGIYVSKVTVGSIAHQAGLEYGDQLLEFNGINLRSATEQQARLIIGQQCDTITILAQYNPHVHQLSSHSRSSSHLDPAGTHSTLQGSGTTTPEHPSVIDPLMEQDEGPSTPPAKQSSSRIAGDANKKTLEPRVVFIKKSQLELGVHLCGGNLHGVFVAEVEDDSPAKGPDGLVPGDLILEYGSLDVRNKTVEEVYVEMLKPRDGVRLKVQYRPEEFTKAKGLPGDSFYIRALYDRLADVEQELSFKKDDILYVDDTLPQGTFGSWMAWQLDENAQKIQRGQIPSKYVMDQEFSRRLSMSEVKDDNSATKTLSAAARRSFFRRKHKHKRSGSKDGKDLLALDAFSSDSIPLFEDSVSLAYQRVQKVDCTALRPVLILGPLLDVVKEMLVNEAPGKFCRCPLEVMKASQQAIERGVKDCLFVDYKRRSGHFDVTTVASIKEITEKNRHCLLDIAPHAIERLHHMHIYPIVIFIHYKSAKHIKEQRDPIYLRDKVTQRHSKEQFEAAQKLEQEYSRYFTGVIQGGALSSICTQILAMVNQEQNKVLWIPACPL.

Residues 98–142 form a disordered region; it reads AEGAGSTYSVLSTMPSDSESSSSLSSVGTTGKAPSPPPLLTDQQV. Residues 109-123 show a composition bias toward low complexity; the sequence is STMPSDSESSSSLSS. Ser-264 and Ser-295 each carry phosphoserine. Residues 383 to 599 are a coiled coil; the sequence is LNKATAQNKD…LEKEARFRQL (217 aa). PDZ domains lie at 620–710 and 705–796; these read VVEF…RRRK and VVRR…LKVF. A Phosphoserine modification is found at Ser-900. 5 disordered regions span residues 927 to 1122, 1150 to 1187, 1201 to 1230, 1245 to 1264, and 1271 to 1306; these read GVGE…FRPK, QEWA…PSTT, SHRV…HQGR, EMRA…LGSS, and AERI…PQSP. Residue Thr-984 is modified to Phosphothreonine. Residue Ser-1000 is modified to Phosphoserine. Thr-1011 bears the Phosphothreonine mark. The segment covering 1017–1030 has biased composition (basic and acidic residues); that stretch reads RRSDSIKFQHRLET. A Phosphoserine modification is found at Ser-1021. The span at 1045–1055 shows a compositional bias: pro residues; that stretch reads TSPPSALPPDV. The residue at position 1183 (Thr-1183) is a Phosphothreonine. Residues Ser-1209 and Ser-1263 each carry the phosphoserine modification. 2 stretches are compositionally biased toward low complexity: residues 1252 to 1264 and 1284 to 1298; these read SNSL…LGSS and RSVV…SHSE. Ser-1334 is modified (phosphoserine). One can recognise a PDZ 3 domain in the interval 1350–1429; that stretch reads HVKVQKGSEP…TITILAQYNP (80 aa). Residues 1434-1493 are disordered; it reads LSSHSRSSSHLDPAGTHSTLQGSGTTTPEHPSVIDPLMEQDEGPSTPPAKQSSSRIAGDA. A compositionally biased stretch (polar residues) spans 1449–1462; the sequence is THSTLQGSGTTTPE. The PDZ 4 domain occupies 1501–1582; it reads RVVFIKKSQL…GVRLKVQYRP (82 aa). The 69-residue stretch at 1593–1661 folds into the SH3 domain; it reads GDSFYIRALY…PSKYVMDQEF (69 aa). Ser-1666 carries the post-translational modification Phosphoserine. Residues 1722 to 1905 enclose the Guanylate kinase-like domain; it reads DSVSLAYQRV…ICTQILAMVN (184 aa).

It belongs to the MAGUK family. Interacts with MPP1. Interacts with CTNNB1 and with the third SH3 domain of SORBS3 to form a ternary complex. Interacts (via coiled-coil domain) with MARK3. Interacts (via PDZ domain 3) with STK3/MST2 and STK4/MST1. Interacts with SCRIB. Interacts with CTNB1, SMO and (via PDZ4 or guanylate kinase-like domain) with KIF7. Highly expressed in normal breast tissues and low-grade breast cancer tissues (at protein level). Highly expressed in the placenta and prostate. Expressed at a lower level in the thyroid, spinal cord, trachea, adrenal gland, skeletal muscle, pancreas, heart, brain, liver and kidney. A short splice product shows more limited expression, being absent from at least the brain.

It localises to the cell junction. It is found in the cell membrane. The protein localises to the postsynaptic density. Its subcellular location is the cytoplasm. The protein resides in the cytoskeleton. It localises to the cilium basal body. Acts as a regulator of the Hippo signaling pathway. Negatively regulates the Hippo signaling pathway by mediating the interaction of MARK3 with STK3/4, bringing them together to promote MARK3-dependent hyperphosphorylation and inactivation of STK3 kinase activity toward LATS1. Positively regulates the Hippo signaling pathway by mediating the interaction of SCRIB with STK4/MST1 and LATS1 which is important for the activation of the Hippo signaling pathway. Involved in regulating cell proliferation, maintenance of epithelial polarity, epithelial-mesenchymal transition (EMT), cell migration and invasion. Plays an important role in dendritic spine formation and synaptogenesis in cortical neurons; regulates synaptogenesis by enhancing the cell surface localization of N-cadherin. Acts as a positive regulator of hedgehog (Hh) signaling pathway. Plays a critical role in the early point of the SMO activity cycle by interacting with SMO at the ciliary base to induce the accumulation of KIF7 and GLI2 at the ciliary tip for GLI2 activation. In Homo sapiens (Human), this protein is Disks large homolog 5 (DLG5).